The sequence spans 179 residues: Ribosome maturation factor RimM (179 aa).

In terms of domain architecture, PRC barrel spans 102–179 (DGEYYWYQLE…EMKVDWDADF (78 aa)).

It belongs to the RimM family. As to quaternary structure, binds ribosomal protein uS19.

The protein resides in the cytoplasm. Its function is as follows. An accessory protein needed during the final step in the assembly of 30S ribosomal subunit, possibly for assembly of the head region. Essential for efficient processing of 16S rRNA. May be needed both before and after RbfA during the maturation of 16S rRNA. It has affinity for free ribosomal 30S subunits but not for 70S ribosomes. This Pseudomonas syringae pv. syringae (strain B728a) protein is Ribosome maturation factor RimM.